The primary structure comprises 29 residues: Frontoxin VI (29 aa).

An intrachain disulfide couples Cys3 to Cys24.

In terms of tissue distribution, expressed by the venom gland.

It localises to the secreted. Its function is as follows. Binds to muscle nicotinic acetylcholine receptor (nAChR) and inhibit acetylcholine from binding to the receptor, thereby impairing neuromuscular transmission. The polypeptide is Frontoxin VI (Micrurus frontalis (Coral snake)).